The sequence spans 264 residues: tRNA1(Val) (adenine(37)-N6)-methyltransferase (264 aa).

It belongs to the methyltransferase superfamily. tRNA (adenine-N(6)-)-methyltransferase family.

The protein resides in the cytoplasm. The catalysed reaction is adenosine(37) in tRNA1(Val) + S-adenosyl-L-methionine = N(6)-methyladenosine(37) in tRNA1(Val) + S-adenosyl-L-homocysteine + H(+). In terms of biological role, specifically methylates the adenine in position 37 of tRNA(1)(Val) (anticodon cmo5UAC). This is tRNA1(Val) (adenine(37)-N6)-methyltransferase from Shewanella pealeana (strain ATCC 700345 / ANG-SQ1).